The following is a 294-amino-acid chain: uncharacterized protein (294 aa).

Residues 1-19 (MFKRSLFILLLLAASLVKA) form the signal peptide.

This is an uncharacterized protein from Rickettsia felis (strain ATCC VR-1525 / URRWXCal2) (Rickettsia azadi).